The following is a 709-amino-acid chain: D-(-)-3-hydroxybutyrate oligomer hydrolase (709 aa).

A signal peptide spans 1-26; sequence MTVFKTAPLLIAALAASSCGGGGSGA. Positions 58 to 77 are disordered; sequence GLGRSGLQDDSPPGYAGSQP. The Charge relay system role is filled by serine 305.

Belongs to the D-(-)-3-hydroxybutyrate oligomer hydrolase family.

The protein resides in the secreted. The catalysed reaction is (3R)-hydroxybutanoate dimer + H2O = 2 (R)-3-hydroxybutanoate + H(+). The protein operates within lipid metabolism; butanoate metabolism. Participates in the degradation of poly-3-hydroxybutyrate (PHB). It works downstream of poly(3-hydroxybutyrate) depolymerase, hydrolyzing D(-)-3-hydroxybutyrate oligomers of various length (3HB-oligomers) into 3HB-monomers. The chain is D-(-)-3-hydroxybutyrate oligomer hydrolase from Paracidovorax citrulli (strain AAC00-1) (Acidovorax citrulli).